The chain runs to 358 residues: Biotin synthase (358 aa).

One can recognise a Radical SAM core domain in the interval 47 to 306; that stretch reads KNNSKIKLCA…ALYKIIMPYA (260 aa). [4Fe-4S] cluster-binding residues include C65, C69, and C72. [2Fe-2S] cluster contacts are provided by S142, C174, C233, and R309.

It belongs to the radical SAM superfamily. Biotin synthase family. In terms of assembly, homodimer. [4Fe-4S] cluster is required as a cofactor. The cofactor is [2Fe-2S] cluster.

The catalysed reaction is (4R,5S)-dethiobiotin + (sulfur carrier)-SH + 2 reduced [2Fe-2S]-[ferredoxin] + 2 S-adenosyl-L-methionine = (sulfur carrier)-H + biotin + 2 5'-deoxyadenosine + 2 L-methionine + 2 oxidized [2Fe-2S]-[ferredoxin]. It functions in the pathway cofactor biosynthesis; biotin biosynthesis; biotin from 7,8-diaminononanoate: step 2/2. Functionally, catalyzes the conversion of dethiobiotin (DTB) to biotin by the insertion of a sulfur atom into dethiobiotin via a radical-based mechanism. This chain is Biotin synthase, found in Methanocaldococcus jannaschii (strain ATCC 43067 / DSM 2661 / JAL-1 / JCM 10045 / NBRC 100440) (Methanococcus jannaschii).